Here is a 301-residue protein sequence, read N- to C-terminus: CPX chromosomal region candidate gene 1 protein (301 aa).

A disordered region spans residues 1-77 (MSYPTKEGSD…ENSELETEIQ (77 aa)). Polar residues predominate over residues 44–60 (VETNPINREPGTATSQE).

As to expression, expressed in a variety of fetal tissues.

This is CPX chromosomal region candidate gene 1 protein (CPXCR1) from Homo sapiens (Human).